We begin with the raw amino-acid sequence, 397 residues long: Odorant receptor 85a (397 aa).

Residues 1 to 46 (MIFKYIQEPVLGSLFRSRDSLIYLNRSIDQMGWRLPPRTKPYWWLY) lie on the Cytoplasmic side of the membrane. The helical transmembrane segment at 47 to 67 (YIWTLVVIVLVFIFIPYGLIM) threads the bilayer. The Extracellular segment spans residues 68–83 (TGIKEFKNFTTTDLFT). Residue asparagine 75 is glycosylated (N-linked (GlcNAc...) asparagine). Residues 84–104 (YVQVPVNTNASIMKGIIVLFM) traverse the membrane as a helical segment. The Cytoplasmic segment spans residues 105–142 (RRRFSRAQKMMDAMDIRCTKMEEKVQVHRAAALCNRVV). A helical transmembrane segment spans residues 143–163 (VIYHCIYFGYLSMALTGALVI). The Extracellular segment spans residues 164–192 (GKTPFCLYNPLVNPDDHFYLATAIESVTM). Residues 193 to 213 (AGIILANLILDVYPIIYVVVL) traverse the membrane as a helical segment. At 214 to 262 (RIHMELLSERIKTLRTDVEKGDDQHYAELVECVKDHKLIVEYGNTLRPM) the chain is on the cytoplasmic side. A helical transmembrane segment spans residues 263–283 (ISATMFIQLLSVGLLLGLAAV). Topologically, residues 284 to 294 (SMQFYNTVMER) are extracellular. The chain crosses the membrane as a helical span at residues 295 to 315 (VVSGVYTIAILSQTFPFCYVC). The Cytoplasmic portion of the chain corresponds to 316–347 (EQLSSDCESLTNTLFHSKWIGAERRYRTTMLY). The helical transmembrane segment at 348-368 (FIHNVQQSILFTAGGIFPICL) threads the bilayer. Residues 369-397 (NTNIKMAKFAFSVVTIVNEMDLAEKLRRE) are Extracellular-facing.

It belongs to the insect chemoreceptor superfamily. Heteromeric odorant receptor channel (TC 1.A.69) family. Or2a subfamily. Interacts with Orco. Complexes exist early in the endomembrane system in olfactory sensory neurons (OSNs), coupling these complexes to the conserved ciliary trafficking pathway. Expressed in olfactory sensory neurons in the antenna.

It localises to the cell membrane. In terms of biological role, odorant receptor which mediates acceptance or avoidance behavior, depending on its substrates. The odorant receptor repertoire encodes a large collection of odor stimuli that vary widely in identity, intensity, and duration. May form a complex with Orco to form odorant-sensing units, providing sensitive and prolonged odorant signaling and calcium permeability. The chain is Odorant receptor 85a (Or85a) from Drosophila melanogaster (Fruit fly).